The following is a 421-amino-acid chain: MDLENKVKKMGLGHEQGFGAPCLKCKEKCEGFELHFWRKICRNCKCGQEEHDVLLSNEEDRKVGKLFEDTKYTTLIAKLKSDGIPMYKRNVMILTNPVAAKKNVSINTVTYEWAPPVHNQALARQYMQMLPKEKQPVAGSEGAQYRKKQLAKQLPAHDQDPSKCHELSPREVKEMEQFVKKYKSEALGVGDVKLPCEMDAQGPKKMYIPGGDRSTPPAAGAMEDKSAEHKSTQYSCYCCKLNMKEGDPAIYAERAGYDKLWHPACFVCSVCHELLVDMIYFWKNEKLYCGRHYCDSEKPRCAGCDELIFSNEYTQAENQNWHLKHFCCFDCDSILAGEIYVMVNDKPVCKPCYVKNHAVVCQGCHNAIDPEVQRVTYNNFSWHASTECFLCSCCSKCLIGQKFMPVEGMVFCSVECKKMMS.

The PET domain occupies 92-199 (MILTNPVAAK…GDVKLPCEMD (108 aa)). Residues 133 to 164 (EKQPVAGSEGAQYRKKQLAKQLPAHDQDPSKC) are disordered. Over residues 155–164 (PAHDQDPSKC) the composition is skewed to basic and acidic residues. 3 consecutive LIM zinc-binding domains span residues 234–297 (YSCY…CDSE), 299–359 (PRCA…NHAV), and 362–421 (QGCH…KMMS).

It belongs to the prickle / espinas / testin family. In terms of assembly, interacts via LIM domain 1 with ZYX. Interacts (via LIM domain 3) with ENAH and VASP. Interacts with ALKBH4, talin, actin, alpha-actinin, GRIP1 and PXN. Interacts (via LIM domain 2) with ACTL7A (via N-terminus). Heterodimer with ACTL7A; the heterodimer interacts with ENAH to form a heterotrimer.

It localises to the cytoplasm. Its subcellular location is the cell junction. It is found in the focal adhesion. Scaffold protein that may play a role in cell adhesion, cell spreading and in the reorganization of the actin cytoskeleton. Plays a role in the regulation of cell proliferation. May act as a tumor suppressor. This chain is Testin (TES), found in Saimiri boliviensis boliviensis (Bolivian squirrel monkey).